The chain runs to 96 residues: Protein RnfH (96 aa).

This sequence belongs to the UPF0125 (RnfH) family.

This is Protein RnfH from Salmonella agona (strain SL483).